The following is a 207-amino-acid chain: Intraflagellar transport protein 43 homolog A (207 aa).

The tract at residues Met-1–Val-104 is disordered.

The protein belongs to the IFT43 family. Component of IFT complex A.

Component of IFT complex A (IFT-A) involved in retrograde ciliary transport along microtubules from the ciliary tip to the base. The protein is Intraflagellar transport protein 43 homolog A (ift43a) of Salmo salar (Atlantic salmon).